A 276-amino-acid polypeptide reads, in one-letter code: TCP pilus virulence regulatory protein (276 aa).

Residues 172–269 (EKISCLVKSD…NVAPSEYLFM (98 aa)) enclose the HTH araC/xylS-type domain. DNA-binding regions (H-T-H motif) lie at residues 189 to 210 (ADIC…ESRG) and 236 to 259 (IKQI…KSTM).

It is found in the cytoplasm. In terms of biological role, probable regulatory protein for the tcp operon. The protein is TCP pilus virulence regulatory protein (tcpN) of Vibrio cholerae serotype O1 (strain ATCC 39541 / Classical Ogawa 395 / O395).